Reading from the N-terminus, the 203-residue chain is ATP-dependent Clp protease proteolytic subunit (203 aa).

The Nucleophile role is filled by serine 100. Residue histidine 125 is part of the active site.

Belongs to the peptidase S14 family. Component of the chloroplastic Clp protease core complex.

It localises to the plastid. The protein resides in the chloroplast stroma. It carries out the reaction Hydrolysis of proteins to small peptides in the presence of ATP and magnesium. alpha-casein is the usual test substrate. In the absence of ATP, only oligopeptides shorter than five residues are hydrolyzed (such as succinyl-Leu-Tyr-|-NHMec, and Leu-Tyr-Leu-|-Tyr-Trp, in which cleavage of the -Tyr-|-Leu- and -Tyr-|-Trp bonds also occurs).. Its function is as follows. Cleaves peptides in various proteins in a process that requires ATP hydrolysis. Has a chymotrypsin-like activity. Plays a major role in the degradation of misfolded proteins. In Dioscorea elephantipes (Elephant's foot yam), this protein is ATP-dependent Clp protease proteolytic subunit.